A 444-amino-acid polypeptide reads, in one-letter code: UDP-N-acetylmuramoylalanine--D-glutamate ligase (444 aa).

109–115 provides a ligand contact to ATP; sequence GSNGKTT.

The protein belongs to the MurCDEF family.

The protein resides in the cytoplasm. It catalyses the reaction UDP-N-acetyl-alpha-D-muramoyl-L-alanine + D-glutamate + ATP = UDP-N-acetyl-alpha-D-muramoyl-L-alanyl-D-glutamate + ADP + phosphate + H(+). It participates in cell wall biogenesis; peptidoglycan biosynthesis. Functionally, cell wall formation. Catalyzes the addition of glutamate to the nucleotide precursor UDP-N-acetylmuramoyl-L-alanine (UMA). This is UDP-N-acetylmuramoylalanine--D-glutamate ligase from Bacteroides fragilis (strain ATCC 25285 / DSM 2151 / CCUG 4856 / JCM 11019 / LMG 10263 / NCTC 9343 / Onslow / VPI 2553 / EN-2).